We begin with the raw amino-acid sequence, 107 residues long: uncharacterized protein (107 aa).

Positions 34 to 107 (FASKDKKDEK…SDNQKKDMSY (74 aa)) form a coiled coil.

This is an uncharacterized protein from Dictyostelium discoideum (Social amoeba).